Reading from the N-terminus, the 303-residue chain is MTAIAQQAADRDQAQAESKAAILIESLSWLQRFHDRIVVVKFGGNAMVDEELTRTFAEDVVYLRYAGLRPVVVHGGGPQISAMLTRLGIDSEFRGGYRVTTPEVLEVVRMVLTGQVSRDVVRGINAHGPLAAAVSGEDAGLFTGRRRGAVVDGVEVDLGLVGDVVSVDPTAVLAQLDAGRIPVVSSIAPDESDPAVSLNVNADAAAAALAVALGAEKLVILTDVAGLYRDWPDRGSLVSDIRADELRALLPSLESGMIPKMAACLEAVDGGVPKAAIIDGRIPHSMLLEIFTTNGIGTEVVPA.

Substrate-binding positions include 76–77, arginine 98, and asparagine 199; that span reads GG.

This sequence belongs to the acetylglutamate kinase family. ArgB subfamily.

Its subcellular location is the cytoplasm. It catalyses the reaction N-acetyl-L-glutamate + ATP = N-acetyl-L-glutamyl 5-phosphate + ADP. It functions in the pathway amino-acid biosynthesis; L-arginine biosynthesis; N(2)-acetyl-L-ornithine from L-glutamate: step 2/4. In terms of biological role, catalyzes the ATP-dependent phosphorylation of N-acetyl-L-glutamate. The chain is Acetylglutamate kinase from Clavibacter sepedonicus (Clavibacter michiganensis subsp. sepedonicus).